The chain runs to 207 residues: Outer-membrane lipoprotein LolB (207 aa).

The first 21 residues, 1–21, serve as a signal peptide directing secretion; sequence MTLPDFRLIRLLPLASLVLTA. The N-palmitoyl cysteine moiety is linked to residue Cys22. Cys22 carries S-diacylglycerol cysteine lipidation.

Belongs to the LolB family. As to quaternary structure, monomer.

It is found in the cell outer membrane. Functionally, plays a critical role in the incorporation of lipoproteins in the outer membrane after they are released by the LolA protein. This is Outer-membrane lipoprotein LolB from Salmonella schwarzengrund (strain CVM19633).